Reading from the N-terminus, the 225-residue chain is Large ribosomal subunit protein eL15 (225 aa).

The tract at residues 159-180 (RPFRGLTSAGKKMRGLRKSRGL) is disordered. The segment covering 169-180 (KKMRGLRKSRGL) has biased composition (basic residues).

The protein belongs to the eukaryotic ribosomal protein eL15 family.

The protein is Large ribosomal subunit protein eL15 (rpl15e) of Aeropyrum pernix (strain ATCC 700893 / DSM 11879 / JCM 9820 / NBRC 100138 / K1).